Reading from the N-terminus, the 234-residue chain is Purine nucleoside phosphorylase DeoD-type (234 aa).

Residue His5 coordinates a purine D-ribonucleoside. Residues Gly21, Arg25, Arg44, and 88-91 (RIGT) contribute to the phosphate site. Residues 180-182 (DME) and 204-205 (SD) contribute to the a purine D-ribonucleoside site. Catalysis depends on Asp205, which acts as the Proton donor.

Belongs to the PNP/UDP phosphorylase family. Homohexamer; trimer of homodimers.

The enzyme catalyses a purine D-ribonucleoside + phosphate = a purine nucleobase + alpha-D-ribose 1-phosphate. It carries out the reaction a purine 2'-deoxy-D-ribonucleoside + phosphate = a purine nucleobase + 2-deoxy-alpha-D-ribose 1-phosphate. Its function is as follows. Catalyzes the reversible phosphorolytic breakdown of the N-glycosidic bond in the beta-(deoxy)ribonucleoside molecules, with the formation of the corresponding free purine bases and pentose-1-phosphate. The sequence is that of Purine nucleoside phosphorylase DeoD-type from Buchnera aphidicola subsp. Acyrthosiphon pisum (strain APS) (Acyrthosiphon pisum symbiotic bacterium).